Reading from the N-terminus, the 230-residue chain is Leucyl/phenylalanyl-tRNA--protein transferase (230 aa).

Belongs to the L/F-transferase family.

It localises to the cytoplasm. The catalysed reaction is N-terminal L-lysyl-[protein] + L-leucyl-tRNA(Leu) = N-terminal L-leucyl-L-lysyl-[protein] + tRNA(Leu) + H(+). It carries out the reaction N-terminal L-arginyl-[protein] + L-leucyl-tRNA(Leu) = N-terminal L-leucyl-L-arginyl-[protein] + tRNA(Leu) + H(+). It catalyses the reaction L-phenylalanyl-tRNA(Phe) + an N-terminal L-alpha-aminoacyl-[protein] = an N-terminal L-phenylalanyl-L-alpha-aminoacyl-[protein] + tRNA(Phe). In terms of biological role, functions in the N-end rule pathway of protein degradation where it conjugates Leu, Phe and, less efficiently, Met from aminoacyl-tRNAs to the N-termini of proteins containing an N-terminal arginine or lysine. This Rhodopseudomonas palustris (strain BisB18) protein is Leucyl/phenylalanyl-tRNA--protein transferase.